A 533-amino-acid polypeptide reads, in one-letter code: CTP synthase (533 aa).

Positions 1 to 268 are amidoligase domain; it reads MGETKYIFVT…DETILQKMGL (268 aa). Residue serine 15 coordinates CTP. Serine 15 lines the UTP pocket. 16 to 21 provides a ligand contact to ATP; it reads SLGKGI. Tyrosine 56 serves as a coordination point for L-glutamine. Aspartate 73 is a binding site for ATP. Mg(2+)-binding residues include aspartate 73 and glutamate 143. CTP is bound by residues 150-152, 189-194, and lysine 225; these read DIE and KTKPTQ. UTP is bound by residues 189–194 and lysine 225; that span reads KTKPTQ. Positions 301–533 constitute a Glutamine amidotransferase type-1 domain; the sequence is YVELQDAYKS…VSFIKAAIDK (233 aa). Position 356 (glycine 356) interacts with L-glutamine. Cysteine 383 serves as the catalytic Nucleophile; for glutamine hydrolysis. Residues 384–387, glutamate 407, and arginine 464 each bind L-glutamine; that span reads LGMQ. Catalysis depends on residues histidine 509 and glutamate 511.

Belongs to the CTP synthase family. In terms of assembly, homotetramer.

It carries out the reaction UTP + L-glutamine + ATP + H2O = CTP + L-glutamate + ADP + phosphate + 2 H(+). The enzyme catalyses L-glutamine + H2O = L-glutamate + NH4(+). It catalyses the reaction UTP + NH4(+) + ATP = CTP + ADP + phosphate + 2 H(+). It functions in the pathway pyrimidine metabolism; CTP biosynthesis via de novo pathway; CTP from UDP: step 2/2. Allosterically activated by GTP, when glutamine is the substrate; GTP has no effect on the reaction when ammonia is the substrate. The allosteric effector GTP functions by stabilizing the protein conformation that binds the tetrahedral intermediate(s) formed during glutamine hydrolysis. Inhibited by the product CTP, via allosteric rather than competitive inhibition. Catalyzes the ATP-dependent amination of UTP to CTP with either L-glutamine or ammonia as the source of nitrogen. Regulates intracellular CTP levels through interactions with the four ribonucleotide triphosphates. This Bacteroides fragilis (strain YCH46) protein is CTP synthase.